Consider the following 852-residue polypeptide: Envelope glycoprotein gp160 (852 aa).

Residues 1–31 (MRARETRKNYQCLWRWGTMLLGMLMICSAAE) form the signal peptide. The Extracellular segment spans residues 32 to 680 (NLWVTVYYGV…ITNWLWYIRI (649 aa)). A disulfide bond links Cys53 and Cys73. Residues Asn87, Asn129, Asn136, Asn141, Asn142, Asn155, Asn159, Asn189, and Asn198 are each glycosylated (N-linked (GlcNAc...) asparagine; by host). 5 disulfide bridges follow: Cys118/Cys206, Cys125/Cys197, Cys130/Cys156, Cys219/Cys248, and Cys229/Cys240. A V1 region spans residues 130 to 155 (CTDYLGNATNTNNSSGGTVEKEEIKN). A V2 region spans residues 156-197 (CSFNITTGIRDKVQKAYAYFYKLDVVPIDDDNTNTSYRLIHC). N-linked (GlcNAc...) asparagine; by host glycans are attached at residues Asn242, Asn263, Asn277, Asn290, and Asn296. The tract at residues 297–330 (CTRPNNNRRRRITSGPGKVLYTTGEIIGDIRKAY) is V3. A disulfide bridge links Cys297 with Cys331. Asn332, Asn339, and Asn355 each carry an N-linked (GlcNAc...) asparagine; by host glycan. Positions 363–373 (SSGGDPEIVMH) are CD4-binding loop. 2 disulfide bridges follow: Cys377–Cys439 and Cys384–Cys412. Residues 384-412 (CNTTKLFNSTWNENSTWNATGNDTITLPC) are V4. N-linked (GlcNAc...) asparagine; by host glycans are attached at residues Asn385, Asn391, Asn397, Asn401, Asn405, Asn442, and Asn457. 2 V5 regions span residues 455–466 (DKNSTTEIFRPA) and 457–466 (NSTTEIFRPA). The fusion peptide stretch occupies residues 507–528 (AVGVIGAMFLGFLGAAGSTMGA). Positions 570 to 588 (KQLQARVLAVERYLRDQQL) are immunosuppression. Cys594 and Cys600 are oxidised to a cystine. N-linked (GlcNAc...) asparagine; by host glycans are attached at residues Asn607, Asn612, Asn621, and Asn633. Residues 629–663 (REIDNYTSLIYTLLEESQNQQEKNEQELLELDKWA) are a coiled coil. Positions 658-679 (ELDKWASLWNWFSITNWLWYIR) are MPER; binding to GalCer. A helical membrane pass occupies residues 681–701 (FIMIVGGLIGLRIIFAVLSIV). Residues 702–852 (NRVRQGYSPL…IRQGFERALL (151 aa)) are Cytoplasmic-facing. The YXXL motif; contains endocytosis signal signature appears at 708-711 (YSPL). The segment at 717–739 (IPAQRGPDRPEGIEEGGGERDRD) is disordered. Positions 722-739 (GPDRPEGIEEGGGERDRD) are enriched in basic and acidic residues. A lipid anchor (S-palmitoyl cysteine; by host) is attached at Cys760. Residues 851-852 (LL) carry the Di-leucine internalization motif motif.

The protein belongs to the HIV-1 env protein family. The mature envelope protein (Env) consists of a homotrimer of non-covalently associated gp120-gp41 heterodimers. The resulting complex protrudes from the virus surface as a spike. There seems to be as few as 10 spikes on the average virion. Interacts with host CD4, CCR5 and CXCR4. Gp120 also interacts with the C-type lectins CD209/DC-SIGN and CLEC4M/DC-SIGNR (collectively referred to as DC-SIGN(R)). Gp120 and gp41 interact with GalCer. Gp120 interacts with host ITGA4/ITGB7 complex; on CD4+ T-cells, this interaction results in rapid activation of integrin ITGAL/LFA-1, which facilitates efficient cell-to-cell spreading of HIV-1. Gp120 interacts with cell-associated heparan sulfate; this interaction increases virus infectivity on permissive cells and may be involved in infection of CD4- cells. In terms of assembly, the mature envelope protein (Env) consists of a homotrimer of non-covalently associated gp120-gp41 heterodimers. The resulting complex protrudes from the virus surface as a spike. There seems to be as few as 10 spikes on the average virion. In terms of processing, highly glycosylated by host. The high number of glycan on the protein is reffered to as 'glycan shield' because it contributes to hide protein sequence from adaptive immune system. Palmitoylation of the transmembrane protein and of Env polyprotein (prior to its proteolytic cleavage) is essential for their association with host cell membrane lipid rafts. Palmitoylation is therefore required for envelope trafficking to classical lipid rafts, but not for viral replication. Post-translationally, specific enzymatic cleavages in vivo yield mature proteins. Envelope glycoproteins are synthesized as an inactive precursor that is heavily N-glycosylated and processed likely by host cell furin in the Golgi to yield the mature SU and TM proteins. The cleavage site between SU and TM requires the minimal sequence [KR]-X-[KR]-R. About 2 of the 9 disulfide bonds of gp41 are reduced by P4HB/PDI, following binding to CD4 receptor.

It localises to the virion membrane. The protein resides in the host cell membrane. Its subcellular location is the host endosome membrane. Oligomerizes in the host endoplasmic reticulum into predominantly trimers. In a second time, gp160 transits in the host Golgi, where glycosylation is completed. The precursor is then proteolytically cleaved in the trans-Golgi and thereby activated by cellular furin or furin-like proteases to produce gp120 and gp41. In terms of biological role, attaches the virus to the host lymphoid cell by binding to the primary receptor CD4. This interaction induces a structural rearrangement creating a high affinity binding site for a chemokine coreceptor like CXCR4 and/or CCR5. Acts as a ligand for CD209/DC-SIGN and CLEC4M/DC-SIGNR, which are respectively found on dendritic cells (DCs), and on endothelial cells of liver sinusoids and lymph node sinuses. These interactions allow capture of viral particles at mucosal surfaces by these cells and subsequent transmission to permissive cells. HIV subverts the migration properties of dendritic cells to gain access to CD4+ T-cells in lymph nodes. Virus transmission to permissive T-cells occurs either in trans (without DCs infection, through viral capture and transmission), or in cis (following DCs productive infection, through the usual CD4-gp120 interaction), thereby inducing a robust infection. In trans infection, bound virions remain infectious over days and it is proposed that they are not degraded, but protected in non-lysosomal acidic organelles within the DCs close to the cell membrane thus contributing to the viral infectious potential during DCs' migration from the periphery to the lymphoid tissues. On arrival at lymphoid tissues, intact virions recycle back to DCs' cell surface allowing virus transmission to CD4+ T-cells. Its function is as follows. Acts as a class I viral fusion protein. Under the current model, the protein has at least 3 conformational states: pre-fusion native state, pre-hairpin intermediate state, and post-fusion hairpin state. During fusion of viral and target intracellular membranes, the coiled coil regions (heptad repeats) assume a trimer-of-hairpins structure, positioning the fusion peptide in close proximity to the C-terminal region of the ectodomain. The formation of this structure appears to drive apposition and subsequent fusion of viral and target cell membranes. Complete fusion occurs in host cell endosomes and is dynamin-dependent, however some lipid transfer might occur at the plasma membrane. The virus undergoes clathrin-dependent internalization long before endosomal fusion, thus minimizing the surface exposure of conserved viral epitopes during fusion and reducing the efficacy of inhibitors targeting these epitopes. Membranes fusion leads to delivery of the nucleocapsid into the cytoplasm. This is Envelope glycoprotein gp160 from Human immunodeficiency virus type 1 group M subtype B (isolate SF33) (HIV-1).